Here is an 85-residue protein sequence, read N- to C-terminus: ATP synthase epsilon chain (85 aa).

Belongs to the ATPase epsilon chain family. F-type ATPases have 2 components, CF(1) - the catalytic core - and CF(0) - the membrane proton channel. CF(1) has five subunits: alpha(3), beta(3), gamma(1), delta(1), epsilon(1). CF(0) has three main subunits: a, b and c.

The protein resides in the cell membrane. Functionally, produces ATP from ADP in the presence of a proton gradient across the membrane. This is ATP synthase epsilon chain from Frankia casuarinae (strain DSM 45818 / CECT 9043 / HFP020203 / CcI3).